The primary structure comprises 420 residues: Subtilisin-like protease 7 (420 aa).

A signal peptide spans 1-20 (MGFITKAIPLALAAASVING). A propeptide spanning residues 21–119 (AEIMETRAGV…IERDARVQIN (99 aa)) is cleaved from the precursor. The Inhibitor I9 domain occupies 36–118 (KYIVVMNDGM…YIERDARVQI (83 aa)). Residues 129–413 (SWGLARVGSK…SFPLNIYEEQ (285 aa)) form the Peptidase S8 domain. Residues Asp-161 and His-192 each act as charge relay system in the active site. Asn-222 and Asn-252 each carry an N-linked (GlcNAc...) asparagine glycan. The active-site Charge relay system is the Ser-346. N-linked (GlcNAc...) asparagine glycosylation occurs at Asn-396.

This sequence belongs to the peptidase S8 family.

It localises to the secreted. Its function is as follows. Secreted subtilisin-like serine protease with keratinolytic activity that contributes to pathogenicity. This chain is Subtilisin-like protease 7 (SUB7), found in Arthroderma benhamiae (strain ATCC MYA-4681 / CBS 112371) (Trichophyton mentagrophytes).